We begin with the raw amino-acid sequence, 69 residues long: Toxin Tma2 (69 aa).

In terms of domain architecture, LCN-type CS-alpha/beta spans 2-66; it reads KDDYPVDTAE…SPTKTSKRCN (65 aa). Cystine bridges form between Cys-14–Cys-65, Cys-18–Cys-41, Cys-27–Cys-48, and Cys-31–Cys-50.

This sequence belongs to the long (4 C-C) scorpion toxin superfamily. Sodium channel inhibitor family. Expressed by the venom gland.

The protein resides in the secreted. Inhibits voltage-gated sodium channels (Nav). This toxin shows insect lethality against crickets. This Tityus macrochirus (Scorpion) protein is Toxin Tma2.